A 368-amino-acid polypeptide reads, in one-letter code: Branched-chain-amino-acid aminotransferase (368 aa).

R101 provides a ligand contact to pyridoxal 5'-phosphate. K204 carries the post-translational modification N6-(pyridoxal phosphate)lysine. Pyridoxal 5'-phosphate-binding positions include Y209, 271 to 272 (IT), and T314.

The protein belongs to the class-IV pyridoxal-phosphate-dependent aminotransferase family. In terms of assembly, homodimer. It depends on pyridoxal 5'-phosphate as a cofactor.

It catalyses the reaction L-leucine + 2-oxoglutarate = 4-methyl-2-oxopentanoate + L-glutamate. It carries out the reaction L-isoleucine + 2-oxoglutarate = (S)-3-methyl-2-oxopentanoate + L-glutamate. The enzyme catalyses L-valine + 2-oxoglutarate = 3-methyl-2-oxobutanoate + L-glutamate. The protein operates within amino-acid biosynthesis; L-isoleucine biosynthesis; L-isoleucine from 2-oxobutanoate: step 4/4. Its pathway is amino-acid biosynthesis; L-leucine biosynthesis; L-leucine from 3-methyl-2-oxobutanoate: step 4/4. It functions in the pathway amino-acid biosynthesis; L-valine biosynthesis; L-valine from pyruvate: step 4/4. Functionally, catalyzes the reversible transfers of an amino group from glutamate to the alpha-ketoacid of the respective amino acid in the final step in the biosynthesis of branchedchain amino acids. The sequence is that of Branched-chain-amino-acid aminotransferase (ilvE) from Mycobacterium tuberculosis (strain CDC 1551 / Oshkosh).